The sequence spans 427 residues: DEAD-box ATP-dependent RNA helicase 56 (427 aa).

Residues 1 to 30 are disordered; the sequence is MGDARDNEAYEEELLDYEEEDEKVPDSGNK. The span at 9–23 shows a compositional bias: acidic residues; the sequence is AYEEELLDYEEEDEK. Positions 46-74 match the Q motif motif; it reads SGFRDFLLKPELLRAIVDSGFEHPSEVQH. The Helicase ATP-binding domain occupies 77-250; the sequence is IPQAILGMDV…KKFMQDPMEI (174 aa). Residue 90–97 coordinates ATP; it reads AKSGMGKT. The short motif at 197–200 is the DECD box element; that stretch reads DECD. In terms of domain architecture, Helicase C-terminal spans 278 to 423; that stretch reads KLNDLLDALD…ELPEQIDTST (146 aa).

The protein belongs to the DEAD box helicase family. DECD subfamily. Interacts with ALY2 and MOS11.

It is found in the nucleus. It carries out the reaction ATP + H2O = ADP + phosphate + H(+). Its function is as follows. ATP-dependent RNA helicase involved in pre-mRNA splicing. Required for the export of mRNA out of the nucleus. In addition to ssRNA and dsRNA, binds dsDNA, but not ssDNA. The chain is DEAD-box ATP-dependent RNA helicase 56 (RH56) from Arabidopsis thaliana (Mouse-ear cress).